Here is a 295-residue protein sequence, read N- to C-terminus: Pyridoxal 5'-phosphate synthase subunit PdxS (295 aa).

Position 25 (aspartate 25) interacts with D-ribose 5-phosphate. The active-site Schiff-base intermediate with D-ribose 5-phosphate is lysine 82. Glycine 154 is a binding site for D-ribose 5-phosphate. A D-glyceraldehyde 3-phosphate-binding site is contributed by arginine 166. D-ribose 5-phosphate-binding positions include glycine 215 and 236–237 (GS).

The protein belongs to the PdxS/SNZ family. In the presence of PdxT, forms a dodecamer of heterodimers.

The enzyme catalyses aldehydo-D-ribose 5-phosphate + D-glyceraldehyde 3-phosphate + L-glutamine = pyridoxal 5'-phosphate + L-glutamate + phosphate + 3 H2O + H(+). It functions in the pathway cofactor biosynthesis; pyridoxal 5'-phosphate biosynthesis. Catalyzes the formation of pyridoxal 5'-phosphate from ribose 5-phosphate (RBP), glyceraldehyde 3-phosphate (G3P) and ammonia. The ammonia is provided by the PdxT subunit. Can also use ribulose 5-phosphate and dihydroxyacetone phosphate as substrates, resulting from enzyme-catalyzed isomerization of RBP and G3P, respectively. The polypeptide is Pyridoxal 5'-phosphate synthase subunit PdxS (Bacillus anthracis (strain A0248)).